A 1400-amino-acid polypeptide reads, in one-letter code: MAPLSRKWLPVVGAVALALTFAQSPGQVSPDTKLDLTANPLRFLARATNLWNSDLPFGQAQNQAYGYLFPHGTFFVIGHLLGVPGWVTQRLWWAVLLTVGFWGLLRVAEALGVGGPSSRVVGAVAFALSPRVLTTLGSISSETLPMMLAPWVLLPTILALRGTSGRSVRALAAQAGLAVALMGAVNAIATLAGCLPAVIWWACHRPNRLWWRYTAWWLLAMALATLWWVMALTQLHGVSPPFLDFIESSGVTTQWSSLVEVLRGTDSWTPFVAPNATAGAPLVTGSAAILGTCLVAAAGLAGLTSPAMPARGRLVTMLLVGVVLLAVGHRGGLASPVAHPVQAFLDAAGTPLRNVHKVGPVIRLPLVLGLAQLLSRVPLPGSAPRPAWLRAFAHPERDKRVAVAVVALTALMVSTSLAWTGRVAPPGTFGALPQYWQEAADWLRTHHAATPTPGRVLVVPGAPFATQVWGTSHDEPLQVLGDGPWGVRDSIPLTPPQTIRALDSVQRLFAAGRPSAGLADTLARQGISYVLVRNDLDPETSRSARPILLHRSIAGSPGLAKLAEFGAPVGPDPLAGFVNDSGLRPRYPAIEIYRVSAPANPGAPYFAATDQLARVDGGPEVLLRLDERRRLQGQPPLGPVLMTADARAAGLPVPQVAVTDTPVARETDYGRVDHHSSAIRAPGDARHTYNRVPDYPVPGAEPVVGGWTGGRITVSSSSADATAMPDVAPASAPAAAVDGDPATAWVSNALQAAVGQWLQVDFDRPVTNAVVTLTPSATAVGAQVRRILIETVNGSTTLRFDEAGKPLTAALPYGETPWVRFTAAATDDGSAGVQFGITDLAITQYDASGFAHPVQLRHTVLVPGPPPGSAIAGWDLGSELLGRPGCAPGPDGVRCAASMALAPEEPANLSRTLTVPRPVSVTPMVWVRPRQGPKLADLIAAPSTTRASGDSDLVDILGSAYAAADGDPATAWTAPQRVVQHKTPPTLTLTLPRPTVVTGLRLAASRSMLPAHPTVVAINLGDGPQVRQLQVGELTTLWLHPRVTDTVSVSLLDWDDVIDRNALGFDQLKPPGLAEVVVLSAGGAPIAPADAARNRARALTVDCDHGPVVAVAGRFVHTSIRTTVGALLDGEPVAALPCEREPIALPAGQQELLISPGAAFVVDGAQLSTPGAGLSSATVTSAETGAWGPTHREVRVPESATSRVLVVPESINSGWVARTSTGARLTPIAVNGWQQAWVVPAGNPGTITLTFAPNSLYRASLAIGLALLPLLALLAFWRTGRRQLADRPTPPWRPGAWAAAGVLAAGAVIASIAGVMVMGTALGVRYALRRRERLRDRVTVGLAAGGLILAGAALSRHPWRSVDGYAGNWASVQLLALISVSVVAASVVATSESRGQDRMQ.

Residues 1–30 (MAPLSRKWLPVVGAVALALTFAQSPGQVSP) form the signal peptide. The next 8 helical transmembrane spans lie at 67 to 87 (YLFP…PGWV), 91 to 111 (LWWA…AEAL), 139 to 159 (ISSE…TILA), 179 to 199 (VALM…PAVI), 215 to 235 (AWWL…LTQL), 282 to 302 (LVTG…GLAG), 314 to 334 (LVTM…GGLA), and 401 to 421 (VAVA…AWTG). Residues 700 to 883 (AEPVVGGWTG…WDLGSELLGR (184 aa)) enclose the F5/8 type C domain. The next 4 membrane-spanning stretches (helical) occupy residues 1256 to 1276 (LYRA…LLAF), 1297 to 1317 (WAAA…GVMV), 1338 to 1358 (VTVG…SRHP), and 1369 to 1389 (WASV…SVVA).

The protein localises to the membrane. The enzyme catalyses Adds an alpha-D-arabinofuranosyl group from trans,octacis-decaprenylphospho-beta-D-arabinofuranose at the 3-O-position of an alpha-(1-&gt;5)-arabinofuranan chain attached to a beta-(1-&gt;5)-galactofuranan chain.. It functions in the pathway cell wall biogenesis; cell wall polysaccharide biosynthesis. Functionally, involved in the biosynthesis of the arabinogalactan (AG) region of the mycolylarabinogalactan-peptidoglycan (mAGP) complex, an essential component of the mycobacterial cell wall. Catalyzes the addition of an arabinofuranosyl (Araf) residue from the sugar donor decaprenyl-phospho-arabinose (DPA) on the C-3 of an alpha-(1-&gt;5)-linked Araf from the arabinan backbone of AG. The protein is Alpha-(1-&gt;3)-arabinofuranosyltransferase (aftD) of Mycobacterium tuberculosis (strain ATCC 25618 / H37Rv).